Reading from the N-terminus, the 270-residue chain is Putative phosphoenolpyruvate synthase regulatory protein (270 aa).

Residue 150–157 (GVSRCGKT) participates in ADP binding.

The protein belongs to the pyruvate, phosphate/water dikinase regulatory protein family. PSRP subfamily.

It catalyses the reaction [pyruvate, water dikinase] + ADP = [pyruvate, water dikinase]-phosphate + AMP + H(+). It carries out the reaction [pyruvate, water dikinase]-phosphate + phosphate + H(+) = [pyruvate, water dikinase] + diphosphate. Its function is as follows. Bifunctional serine/threonine kinase and phosphorylase involved in the regulation of the phosphoenolpyruvate synthase (PEPS) by catalyzing its phosphorylation/dephosphorylation. This chain is Putative phosphoenolpyruvate synthase regulatory protein, found in Aeromonas hydrophila subsp. hydrophila (strain ATCC 7966 / DSM 30187 / BCRC 13018 / CCUG 14551 / JCM 1027 / KCTC 2358 / NCIMB 9240 / NCTC 8049).